Reading from the N-terminus, the 457-residue chain is MGLIVSIFNIGCAIGGIVLSKVGDIYGRRIGLITVTAIYVVGILIQITSINKWYQYFIGRIISGIGVGGIAVLSPMLISEVAPKHIRGTLVQLYQLMGTMGIFLGYCTNYGTKNYHNATQWRVGLGLCFAWATFMVSGMMFVPESPRYLIEVGKDEEAKHSLSKSNKVSVDDPALLAEYDTIKAGIEIEKLAGNASWSELLSTKTKVFQRVLMGVIIQSLQQLTGDNYFFYYGTTIFKSVGLKDSFQTSIIIGVVNFFSSFIAVYTIERFGRRTCLLWGAASMLCCFAVFASVGVTKLWPQGSSHQDITSQGAGNCMIVFTMFFIFSFATTWAGGCFVIVSETFPLRAKSRGMAIATAANWMWGFLISFFTPFITGAINFYYGYVFLGCLVFAYFYVFFFVPETKGLTLEEVNTMWLEGVPAWKSASWVPPERRTADYDADAIDHDNRPIYKRFFSS.

Residues 1-2 are Cytoplasmic-facing; that stretch reads MG. A helical transmembrane segment spans residues 3-23; the sequence is LIVSIFNIGCAIGGIVLSKVG. At 24–29 the chain is on the extracellular side; it reads DIYGRR. A helical membrane pass occupies residues 30–50; it reads IGLITVTAIYVVGILIQITSI. Residues 51-60 are Cytoplasmic-facing; the sequence is NKWYQYFIGR. The helical transmembrane segment at 61–81 threads the bilayer; that stretch reads IISGIGVGGIAVLSPMLISEV. At 82 to 87 the chain is on the extracellular side; sequence APKHIR. A helical membrane pass occupies residues 88 to 108; the sequence is GTLVQLYQLMGTMGIFLGYCT. The Cytoplasmic segment spans residues 109 to 122; sequence NYGTKNYHNATQWR. A helical transmembrane segment spans residues 123 to 143; it reads VGLGLCFAWATFMVSGMMFVP. The Extracellular segment spans residues 144 to 247; the sequence is ESPRYLIEVG…KSVGLKDSFQ (104 aa). N194 is a glycosylation site (N-linked (GlcNAc...) asparagine). A helical transmembrane segment spans residues 248 to 268; it reads TSIIIGVVNFFSSFIAVYTIE. At 269–274 the chain is on the cytoplasmic side; it reads RFGRRT. A helical transmembrane segment spans residues 275-295; the sequence is CLLWGAASMLCCFAVFASVGV. Residues 296 to 319 lie on the Extracellular side of the membrane; it reads TKLWPQGSSHQDITSQGAGNCMIV. The chain crosses the membrane as a helical span at residues 320–340; that stretch reads FTMFFIFSFATTWAGGCFVIV. Residues 341-353 lie on the Cytoplasmic side of the membrane; that stretch reads SETFPLRAKSRGM. A helical transmembrane segment spans residues 354–374; the sequence is AIATAANWMWGFLISFFTPFI. The Extracellular portion of the chain corresponds to 375 to 379; sequence TGAIN. The helical transmembrane segment at 380–400 threads the bilayer; that stretch reads FYYGYVFLGCLVFAYFYVFFF. Residues 401–457 lie on the Cytoplasmic side of the membrane; sequence VPETKGLTLEEVNTMWLEGVPAWKSASWVPPERRTADYDADAIDHDNRPIYKRFFSS.

This sequence belongs to the major facilitator superfamily. Sugar transporter (TC 2.A.1.1) family.

Its subcellular location is the membrane. In terms of biological role, probable glucose transporter. The sequence is that of Putative hexose transporter 12 (HXT12) from Saccharomyces cerevisiae (strain ATCC 204508 / S288c) (Baker's yeast).